The chain runs to 336 residues: Phospho-N-acetylmuramoyl-pentapeptide-transferase (336 aa).

The next 10 helical transmembrane spans lie at 3–23 (LTLI…PYFI), 53–73 (GGTV…LFSI), 78–98 (SLAL…IGFL), 118–138 (LALQ…PSGI), 143–163 (VFGY…FWVV), 174–194 (GIDG…GVIA), 200–220 (FDVL…FCFN), 226–246 (VFMG…ISIA), 251–271 (WTLL…MLQV), and 316–336 (AFLW…LYVF).

This sequence belongs to the glycosyltransferase 4 family. MraY subfamily. The cofactor is Mg(2+).

Its subcellular location is the cell membrane. The enzyme catalyses UDP-N-acetyl-alpha-D-muramoyl-L-alanyl-gamma-D-glutamyl-L-lysyl-D-alanyl-D-alanine + di-trans,octa-cis-undecaprenyl phosphate = Mur2Ac(oyl-L-Ala-gamma-D-Glu-L-Lys-D-Ala-D-Ala)-di-trans,octa-cis-undecaprenyl diphosphate + UMP. It participates in cell wall biogenesis; peptidoglycan biosynthesis. Catalyzes the initial step of the lipid cycle reactions in the biosynthesis of the cell wall peptidoglycan: transfers peptidoglycan precursor phospho-MurNAc-pentapeptide from UDP-MurNAc-pentapeptide onto the lipid carrier undecaprenyl phosphate, yielding undecaprenyl-pyrophosphoryl-MurNAc-pentapeptide, known as lipid I. This Streptococcus pyogenes serotype M49 (strain NZ131) protein is Phospho-N-acetylmuramoyl-pentapeptide-transferase.